A 97-amino-acid polypeptide reads, in one-letter code: Probable gamma-secretase subunit PEN-2 (97 aa).

Residues 1-20 (MLIPEDDKLDDEKMINIAKK) lie on the Cytoplasmic side of the membrane. An intramembrane region (helical) is located at residues 21-39 (LWFIGFFFLPWVWLINILY). The Cytoplasmic portion of the chain corresponds to 40–55 (FIPYRNSLNDKVKWYL). The chain crosses the membrane as a helical span at residues 56 to 76 (KFSLIGFLGYSTIFMGWMGIY). At 77–97 (LVNRNKWGAFGDDISITIPFG) the chain is on the lumenal side.

This sequence belongs to the PEN-2 family. In terms of assembly, the functional gamma-secretase complex is composed of at least four polypeptides: a presenilin homodimer, nicastrin, aph1 and psenen.

Its subcellular location is the endoplasmic reticulum membrane. The protein localises to the golgi apparatus. It localises to the golgi stack membrane. The protein resides in the cell membrane. It is found in the membrane. In terms of biological role, essential subunit of the gamma-secretase complex, an endoprotease complex that catalyzes the intramembrane cleavage of integral membrane proteins such as Notch receptors. The gamma-secretase complex plays a role in Notch and Wnt signaling cascades and regulation of downstream processes via its role in processing key regulatory proteins. This Dictyostelium discoideum (Social amoeba) protein is Probable gamma-secretase subunit PEN-2 (psenen).